We begin with the raw amino-acid sequence, 307 residues long: Taste receptor type 2 member 10 (307 aa).

Residues 1–6 (MLSVVE) lie on the Extracellular side of the membrane. A helical transmembrane segment spans residues 7–27 (GILILVVISESVFGVLGNGFI). Residues 28–42 (GLVNCIDCAKNKLST) are Cytoplasmic-facing. The helical transmembrane segment at 43-63 (IGFILTGLAISRIFLIWIIIT) threads the bilayer. Residues 64 to 100 (DGFIQIFSPDVYASGNLIEYISYFWVITNQSSIWFAT) lie on the Extracellular side of the membrane. N-linked (GlcNAc...) asparagine glycosylation is present at N92. A helical membrane pass occupies residues 101 to 121 (SLSIFYFLKIANFSNYIFLWL). At 122-126 (KSRIN) the chain is on the cytoplasmic side. A helical transmembrane segment spans residues 127 to 147 (RVLPLLMGFLLISCLLNFAYI). The Extracellular portion of the chain corresponds to 148–179 (VKILNDLKMKNDTVWRLNMYKSEYFIKQLLLN). N158 carries N-linked (GlcNAc...) asparagine glycosylation. Residues 180–200 (LGVIFFFTLSLITSVLLIISL) traverse the membrane as a helical segment. The Cytoplasmic segment spans residues 201 to 227 (WRHNRQMQSNVTGLRDSITEAHVKAMK). Residues 228–248 (VLISFIILFILYFIGIAIEIS) form a helical membrane-spanning segment. Residues 249-257 (YFTVPENKL) are Extracellular-facing. A helical membrane pass occupies residues 258–278 (LLIFGMTTTAIYPWGHSFILI). Over 279–307 (LGNSKLKQASLRVLQQLKCCEERKNLRAT) the chain is Cytoplasmic.

It belongs to the G-protein coupled receptor T2R family.

The protein localises to the membrane. Its function is as follows. Receptor that may play a role in the perception of bitterness and is gustducin-linked. May play a role in sensing the chemical composition of the gastrointestinal content. The activity of this receptor may stimulate alpha gustducin, mediate PLC-beta-2 activation and lead to the gating of TRPM5. In Papio hamadryas (Hamadryas baboon), this protein is Taste receptor type 2 member 10 (TAS2R10).